We begin with the raw amino-acid sequence, 75 residues long: Movement protein TGBp3 (75 aa).

Residues 1–2 (MR) are Lumenal-facing. A helical membrane pass occupies residues 3–23 (VLDLILALITAAVVGYTIALV). The Cytoplasmic portion of the chain corresponds to 24-75 (SNSGCYVHFDGRSATTTCPPGPWVESIANGLYTAGLARPHPEPECERRQSSW).

It belongs to the Tymovirales TGBp3 protein family.

It localises to the host endoplasmic reticulum membrane. In terms of biological role, plays a role in viral cell-to-cell propagation, by facilitating genome transport to neighboring plant cells through plasmosdesmata. May induce the formation of granular vesicles derived from the Endoplasmic reticulum, which align on actin filaments. This is Movement protein TGBp3 from Strawberry mild yellow edge-associated virus (SMYEaV).